Consider the following 324-residue polypeptide: Acetyl-coenzyme A carboxylase carboxyl transferase subunit beta (324 aa).

Residues 28–297 (LWCKCPSCNA…AVAPAAAKAP (270 aa)) enclose the CoA carboxyltransferase N-terminal domain. Zn(2+)-binding residues include C32, C35, C51, and C54. The C4-type zinc finger occupies 32-54 (CPSCNAILYKSEVERNLEVCPKC).

It belongs to the AccD/PCCB family. In terms of assembly, acetyl-CoA carboxylase is a heterohexamer composed of biotin carboxyl carrier protein (AccB), biotin carboxylase (AccC) and two subunits each of ACCase subunit alpha (AccA) and ACCase subunit beta (AccD). It depends on Zn(2+) as a cofactor.

The protein resides in the cytoplasm. It catalyses the reaction N(6)-carboxybiotinyl-L-lysyl-[protein] + acetyl-CoA = N(6)-biotinyl-L-lysyl-[protein] + malonyl-CoA. It participates in lipid metabolism; malonyl-CoA biosynthesis; malonyl-CoA from acetyl-CoA: step 1/1. Its function is as follows. Component of the acetyl coenzyme A carboxylase (ACC) complex. Biotin carboxylase (BC) catalyzes the carboxylation of biotin on its carrier protein (BCCP) and then the CO(2) group is transferred by the transcarboxylase to acetyl-CoA to form malonyl-CoA. The protein is Acetyl-coenzyme A carboxylase carboxyl transferase subunit beta of Methylococcus capsulatus (strain ATCC 33009 / NCIMB 11132 / Bath).